We begin with the raw amino-acid sequence, 355 residues long: uncharacterized protein (355 aa).

ATP is bound at residue 132–139 (GPPGCGKT).

This sequence belongs to the AAA ATPase family.

Its subcellular location is the mitochondrion. This is an uncharacterized protein from Schizosaccharomyces pombe (strain 972 / ATCC 24843) (Fission yeast).